A 409-amino-acid polypeptide reads, in one-letter code: Broad specificity amino-acid racemase (409 aa).

The N-terminal stretch at 1–25 is a signal peptide; sequence MRLKKTLLSIAIAAATFTPAMHSIA. The cysteines at positions 72 and 98 are disulfide-linked. Catalysis depends on lysine 76, which acts as the Proton acceptor. An N6-(pyridoxal phosphate)lysine modification is found at lysine 76. Arginine 175 is a binding site for substrate. Tyrosine 301 acts as the Proton acceptor in catalysis. Substrate is bound at residue methionine 349.

The protein belongs to the alanine racemase family. Bsr subfamily. Requires pyridoxal 5'-phosphate as cofactor.

The protein localises to the periplasm. It catalyses the reaction an L-alpha-amino acid = a D-alpha-amino acid. The enzyme catalyses L-lysine = D-lysine. It carries out the reaction L-arginine = D-arginine. Its function is as follows. Amino-acid racemase able to utilize a broad range of substrates. The chain is Broad specificity amino-acid racemase from Vibrio parahaemolyticus serotype O3:K6 (strain RIMD 2210633).